We begin with the raw amino-acid sequence, 308 residues long: uncharacterized protein (308 aa).

Composition is skewed to polar residues over residues 138–148 (WSFTKHGSNTP) and 205–229 (STSHLNHPSTSNSPDPLYSASQPPS). 2 disordered regions span residues 138-157 (WSFTKHGSNTPSDSSSPLCN) and 205-235 (STSHLNHPSTSNSPDPLYSASQPPSIKTDAS).

Its subcellular location is the cytoplasm. This is an uncharacterized protein from Schizosaccharomyces pombe (strain 972 / ATCC 24843) (Fission yeast).